The chain runs to 196 residues: Peptidyl-tRNA hydrolase (196 aa).

A tRNA-binding site is contributed by Tyr-17. His-22 (proton acceptor) is an active-site residue. Residues Phe-68, Asn-70, and Asn-116 each coordinate tRNA.

The protein belongs to the PTH family. As to quaternary structure, monomer.

The protein resides in the cytoplasm. The catalysed reaction is an N-acyl-L-alpha-aminoacyl-tRNA + H2O = an N-acyl-L-amino acid + a tRNA + H(+). Its function is as follows. Hydrolyzes ribosome-free peptidyl-tRNAs (with 1 or more amino acids incorporated), which drop off the ribosome during protein synthesis, or as a result of ribosome stalling. Functionally, catalyzes the release of premature peptidyl moieties from peptidyl-tRNA molecules trapped in stalled 50S ribosomal subunits, and thus maintains levels of free tRNAs and 50S ribosomes. The chain is Peptidyl-tRNA hydrolase from Serratia proteamaculans (strain 568).